The primary structure comprises 265 residues: Orotidine 5'-phosphate decarboxylase (265 aa).

Substrate is bound by residues Asp-38, Lys-60–His-62, Asp-91–Thr-100, Tyr-213, and Arg-232. Residue Lys-93 is the Proton donor of the active site.

It belongs to the OMP decarboxylase family.

The catalysed reaction is orotidine 5'-phosphate + H(+) = UMP + CO2. It functions in the pathway pyrimidine metabolism; UMP biosynthesis via de novo pathway; UMP from orotate: step 2/2. The chain is Orotidine 5'-phosphate decarboxylase (pyrG) from Mucor circinelloides f. lusitanicus (Mucor racemosus var. lusitanicus).